The following is a 600-amino-acid chain: NADH-quinone oxidoreductase subunit C/D (600 aa).

The segment at 1-190 is NADH dehydrogenase I subunit C; it reads MVNNMTDLTA…SPFELTKAKQ (190 aa). An NADH dehydrogenase I subunit D region spans residues 214–600; the sequence is DFMFLNLGPN…IDFVMSDVDR (387 aa).

It in the N-terminal section; belongs to the complex I 30 kDa subunit family. This sequence in the C-terminal section; belongs to the complex I 49 kDa subunit family. In terms of assembly, NDH-1 is composed of 13 different subunits. Subunits NuoB, CD, E, F, and G constitute the peripheral sector of the complex.

It localises to the cell inner membrane. It catalyses the reaction a quinone + NADH + 5 H(+)(in) = a quinol + NAD(+) + 4 H(+)(out). Functionally, NDH-1 shuttles electrons from NADH, via FMN and iron-sulfur (Fe-S) centers, to quinones in the respiratory chain. The immediate electron acceptor for the enzyme in this species is believed to be ubiquinone. Couples the redox reaction to proton translocation (for every two electrons transferred, four hydrogen ions are translocated across the cytoplasmic membrane), and thus conserves the redox energy in a proton gradient. The polypeptide is NADH-quinone oxidoreductase subunit C/D (Escherichia coli O127:H6 (strain E2348/69 / EPEC)).